We begin with the raw amino-acid sequence, 290 residues long: MTSTNSRKSAISKSWPAPAKLNLFLHVTGQRADGYHELQTLFQFIDHCDYLDFHITDTPDLILHSTMSDSVADSDNLILKAAKSLKRYTQYEGGAHIWLEKLLPMGGGLGGGSSDAATTLVALNALWKTNISPNKLAEIGLTLGADVPVFINGLSAFAEGVGEKLITVQPPESWYLVIVPDVHVSTQAVFQHPDLPRNTPKLDMSSLMTQQWSNDCQKLVTTKHPQVANALSWLVEYAPSRMTGTGACVFGEFTHSQQALDALAKLPADMQGFVAKGMNKSPLQIRLEQL.

Lysine 20 is an active-site residue. ATP is bound at residue 104-114 (PMGGGLGGGSS). Residue aspartate 146 is part of the active site.

The protein belongs to the GHMP kinase family. IspE subfamily.

It carries out the reaction 4-CDP-2-C-methyl-D-erythritol + ATP = 4-CDP-2-C-methyl-D-erythritol 2-phosphate + ADP + H(+). Its pathway is isoprenoid biosynthesis; isopentenyl diphosphate biosynthesis via DXP pathway; isopentenyl diphosphate from 1-deoxy-D-xylulose 5-phosphate: step 3/6. In terms of biological role, catalyzes the phosphorylation of the position 2 hydroxy group of 4-diphosphocytidyl-2C-methyl-D-erythritol. The polypeptide is 4-diphosphocytidyl-2-C-methyl-D-erythritol kinase (Shewanella frigidimarina (strain NCIMB 400)).